We begin with the raw amino-acid sequence, 912 residues long: Probable dipeptidyl-aminopeptidase B (912 aa).

Basic and acidic residues predominate over residues 1–25; that stretch reads MAAEKGESSDEERKPLTRDSMEYRD. Disordered regions lie at residues 1-31 and 49-70; these read MAAE…NSLH and GSTH…SDDG. Residues 1–92 are Cytoplasmic-facing; that stretch reads MAAEKGESSD…GGKPVQKKVK (92 aa). The chain crosses the membrane as a helical; Signal-anchor for type II membrane protein span at residues 93 to 113; the sequence is IVLGFLLFLCLSGWSLSFVLF. Residues 114-912 are Vacuolar-facing; sequence LFGGHESSKT…RAAIWVGLSI (799 aa). Residues Asn130, Asn210, Asn346, Asn569, and Asn656 are each glycosylated (N-linked (GlcNAc...) asparagine). Residue Ser751 is the Charge relay system of the active site. N-linked (GlcNAc...) asparagine glycosylation is present at Asn810. Catalysis depends on charge relay system residues Asp828 and His861. Asn897 carries an N-linked (GlcNAc...) asparagine glycan.

The protein belongs to the peptidase S9B family.

The protein localises to the vacuole membrane. The catalysed reaction is Release of an N-terminal dipeptide, Xaa-Yaa-|-Zaa-, from a polypeptide, preferentially when Yaa is Pro, provided Zaa is neither Pro nor hydroxyproline.. In terms of biological role, type IV dipeptidyl-peptidase which removes N-terminal dipeptides sequentially from polypeptides having unsubstituted N-termini provided that the penultimate residue is proline. This Paracoccidioides lutzii (strain ATCC MYA-826 / Pb01) (Paracoccidioides brasiliensis) protein is Probable dipeptidyl-aminopeptidase B (DAPB).